Here is a 261-residue protein sequence, read N- to C-terminus: uncharacterized protein (261 aa).

The signal sequence occupies residues 1 to 22; sequence MGYSKRFALYISVMILIFAIAG. Cysteine 23 carries N-palmitoyl cysteine lipidation. Residue cysteine 23 is the site of S-diacylglycerol cysteine attachment.

The protein belongs to the staphylococcal tandem lipoprotein family.

It localises to the cell membrane. This is an uncharacterized protein from Staphylococcus aureus (strain N315).